The sequence spans 166 residues: Regulator of ribonuclease activity A (166 aa).

It belongs to the RraA family. In terms of assembly, homotrimer. Binds to both RNA-binding sites in the C-terminal region of Rne and to RhlB.

It is found in the cytoplasm. Its function is as follows. Globally modulates RNA abundance by binding to RNase E (Rne) and regulating its endonucleolytic activity. Can modulate Rne action in a substrate-dependent manner by altering the composition of the degradosome. Modulates RNA-binding and helicase activities of the degradosome. The protein is Regulator of ribonuclease activity A of Histophilus somni (strain 2336) (Haemophilus somnus).